We begin with the raw amino-acid sequence, 286 residues long: Ribosome-inactivating protein momordin II (286 aa).

An N-terminal signal peptide occupies residues 1 to 23 (MVKCLLLSFLIIAIFIGVPTAKG). Glu181 is an active-site residue.

It belongs to the ribosome-inactivating protein family. Type 1 RIP subfamily.

It catalyses the reaction Endohydrolysis of the N-glycosidic bond at one specific adenosine on the 28S rRNA.. This is Ribosome-inactivating protein momordin II from Momordica balsamina (Bitter gourd).